The sequence spans 68 residues: Large ribosomal subunit protein uL29 (68 aa).

Belongs to the universal ribosomal protein uL29 family.

The protein is Large ribosomal subunit protein uL29 of Wigglesworthia glossinidia brevipalpis.